The following is a 172-amino-acid chain: UPF0254 protein Mlab_1743 (172 aa).

It belongs to the UPF0254 family.

The protein is UPF0254 protein Mlab_1743 of Methanocorpusculum labreanum (strain ATCC 43576 / DSM 4855 / Z).